The chain runs to 320 residues: Histidine decarboxylase proenzyme (320 aa).

A propeptide spanning residues 2-11 (NKNLEANRNR) is cleaved from the precursor. Residue S98 is modified to Pyruvic acid (Ser). E215 (proton donor) is an active-site residue.

The proenzyme is a hexamer of identical pi chains; each pi chain monomer is cleaved to form a small (or beta) chain and a large (or alpha) chain by non-hydrolytic self-catalysis. Pyruvate serves as cofactor.

The catalysed reaction is L-histidine + H(+) = histamine + CO2. The protein is Histidine decarboxylase proenzyme (hdc) of Clostridium perfringens (strain 13 / Type A).